Reading from the N-terminus, the 278-residue chain is Protein D7 (278 aa).

CHHC U11-48K-type zinc fingers lie at residues 6–33 (LMQCPYDKNHMIRPSRFPYHLVKCRENN) and 40–67 (LATCPYNARHRVPKQELDLHMASCEYRV). 8 residues coordinate Zn(2+): Cys-9, His-15, His-25, Cys-29, Cys-43, His-49, His-59, and Cys-63. Residues 149 to 164 (QVKQNQPEPEPFTSSE) are compositionally biased toward polar residues. Disordered stretches follow at residues 149 to 230 (QVKQ…PKAN) and 249 to 278 (PGGSSAASEPLGVDSFDEWPCLGRQPWVRK). Basic and acidic residues predominate over residues 165 to 175 (RNYDPRSKEPP). A compositionally biased stretch (polar residues) spans 188-200 (ATTNTNPWCRQTG). The segment covering 214–225 (SSDEGPRNKEFP) has biased composition (basic and acidic residues).

This sequence belongs to the UPF0224 (FAM112) family.

It is found in the cytoplasm. Functionally, involved in oocyte maturation. It is possible that D7 is required at a certain point in the maturation process and that maturation cannot proceed beyond this point unless a threshold amount of D7 protein is provided. In Xenopus laevis (African clawed frog), this protein is Protein D7 (d7).